Reading from the N-terminus, the 177-residue chain is Phycocyanin PC645 beta subunit (177 aa).

Tyrosine 18 serves as a coordination point for mesobiliverdin. Residues lysine 28, asparagine 35, and aspartate 39 each coordinate (2R,3E)-phycocyanobilin. 15,16-dihydrobiliverdin-binding residues include cysteine 50, aspartate 54, and cysteine 61. The (2R,3E)-phycocyanobilin site is built by asparagine 72, arginine 77, cysteine 82, arginine 84, and aspartate 85. Glutamine 148 is a 15,16-dihydrobiliverdin binding site. Residues proline 154, glycine 156, and cysteine 158 each coordinate (2R,3E)-phycocyanobilin.

The protein belongs to the phycobiliprotein family. As to quaternary structure, heterotetramer of 2 different alpha chains and 2 identical beta chains which form 2 alpha-beta heterodimers within the heterotetramer. In terms of processing, contains two phycocyanobilin chromophores, one mesobiliverdin chromophore and one 15,16-dihydrobiliverdin chromophore with binding mediated by both the alpha and beta subunits.

The protein localises to the plastid. The protein resides in the chloroplast thylakoid membrane. Its function is as follows. Light-harvesting photosynthetic tetrapyrrole chromophore-protein from the phycobiliprotein complex. The chain is Phycocyanin PC645 beta subunit from Chroomonas sp. (strain CCMP270).